Consider the following 788-residue polypeptide: Integrin beta-3 (788 aa).

The first 26 residues, 1 to 26, serve as a signal peptide directing secretion; that stretch reads MRARPRPRPLWATVLALGALAGVGVG. The Extracellular portion of the chain corresponds to 27–718; it reads GPNICTTRGV…EEPECPKGPD (692 aa). Positions 30 to 76 constitute a PSI domain; that stretch reads ICTTRGVSSCQQCLAVSPMCAWCSDEALPLGSPRCDLKENLLKDNCA. Cystine bridges form between C31–C49, C39–C461, C42–C64, C52–C75, C203–C210, C258–C299, C400–C412, C432–C459, C463–C483, C474–C486, C488–C497, C499–C529, C512–C527, C521–C532, C534–C547, C549–C570, C554–C568, C562–C573, and C575–C584. Residue N125 is glycosylated (N-linked (GlcNAc...) asparagine). The 243-residue stretch at 135–377 folds into the VWFA domain; that stretch reads DYPVDIYYLM…QLIVDAYGKI (243 aa). S147 and S149 together coordinate Mg(2+). Positions 149, 152, 153, and 184 each coordinate Ca(2+). Residues 203 to 210 form an involved in CX3CL1-, NRG1-, FGF1- and IGF1-binding region; it reads CYDMKTTC. Ca(2+) contacts are provided by N241, D243, P245, E246, and D277. E246 is a Mg(2+) binding site. The interval 293–313 is CX3CL1-binding; it reads QPNDGQCHVGSDNHYSASTTM. N346 carries an N-linked (GlcNAc...) asparagine glycan. M361 is a binding site for Ca(2+). N397 is a glycosylation site (N-linked (GlcNAc...) asparagine). I-EGF domains are found at residues 463–498, 499–548, 549–585, and 586–625; these read CQAQ…SQCE, CSEE…KYCE, CDDF…YYCN, and CTTR…DTCE. Residue N478 is glycosylated (N-linked (GlcNAc...) asparagine). N-linked (GlcNAc...) asparagine glycosylation occurs at N585. Disulfide bonds link C586–C609, C593–C607, C601–C612, C614–C624, C627–C630, C634–C681, C640–C661, C643–C657, and C689–C713. N-linked (GlcNAc...) asparagine glycosylation is present at N680. The chain crosses the membrane as a helical span at residues 719–741; sequence ILVVLLSVMGAILLIGLAALLIW. Topologically, residues 742–788 are cytoplasmic; it reads KLLITIHDRKEFAKFEEERARAKWDTANNPLYKEATSTFTNITYRGT. At T767 the chain carries Phosphothreonine. Phosphotyrosine is present on Y773. Residues 777–783 carry the LIR motif; that stretch reads TSTFTNI. A Phosphothreonine; by PDPK1 and PKB/AKT1; in vitro modification is found at T779. Y785 bears the Phosphotyrosine mark.

This sequence belongs to the integrin beta chain family. As to quaternary structure, heterodimer of an alpha and a beta subunit. Beta-3 (ITGB3) associates with either alpha-IIb (ITGA2B) or alpha-V (ITGAV). Isoform Beta-3C interacts with FLNB. Interacts with COMP. Interacts with PDIA6 following platelet stimulation. Interacts with SYK; upon activation by ITGB3 promotes platelet adhesion. Interacts with MYO10. Interacts with DAB2. Interacts with FERMT2. Interacts with EMP2; regulates the levels of the heterodimer ITGA5:ITGB3 integrin expression on the plasma membrane. Integrin ITGAV:ITGB3 interacts with FBLN5 (via N-terminus). ITGAV:ITGB3 interacts with CCN3. ITGAV:ITGB3 and ITGA2B:ITGB3 interact with SELP (via C-type lectin domain); the interaction mediates cell-cell interaction and adhesion. ITGAV:ITGB3 is found in a ternary complex with CX3CR1 and CX3CL1. ITGAV:ITGB3 is found in a ternary complex with NRG1 and ERBB3. ITGAV:ITGB3 is found in a ternary complex with FGF1 and FGFR1. ITGAV:ITGB3 interacts with FGF2; it is likely that FGF2 can simultaneously bind ITGAV:ITGB3 and FGF receptors. ITGAV:ITGB3 binds to IL1B. ITGAV:ITGB3 is found in a ternary complex with IGF1 and IGF1R. ITGAV:ITGB3 interacts with IGF2. ITGAV:ITGB3 interacts with FBN1. ITGAV:ITGB3 interacts with CD9, CD81 and CD151 (via second extracellular domain). Interacts (via the allosteric site (site 2)) with CXCL12 in a CXCR4-independent manner. Interacts with MXRA8/DICAM; the interaction inhibits ITGAV:ITGB3 heterodimer formation. ITGAV:ITGB3 interacts with PTN. Forms a complex with PTPRZ1 and PTN that stimulates endothelial cell migration through ITGB3 Tyr-773 phosphorylation. ITGAV:ITGB3 interacts with SLC6A4. Interacts with SLC6A4 (via C-terminus); this interaction regulates SLC6A4 trafficking. ITGA2B:ITGB3 interacts with PPIA/CYPA; the interaction is ROS and PPIase activity-dependent and is increased in the presence of thrombin. Interacts with tensin TNS3; TNS3 also interacts with PEAK1, thus acting as an adapter molecule to bridge the association of PEAK1 with ITGB3. Interacts with TM4SF19. (Microbial infection) Integrin ITGAV:ITGB3 interacts with herpes virus 8/HHV-8 glycoprotein B. In terms of assembly, (Microbial infection) Integrin ITGAV:ITGB3 interacts with coxsackievirus A9 capsid proteins. As to quaternary structure, (Microbial infection) Interacts with Hantaan virus glycoprotein G. (Microbial infection) Integrin ITGAV:ITGB3 interacts with cytomegalovirus/HHV-5 gH:gL proteins. In terms of assembly, (Microbial infection) Integrin ITGA5:ITGB3 interacts with human metapneumovirus fusion protein. As to quaternary structure, (Microbial infection) Integrin ITGAV:ITGB3 interacts with human parechovirus 1 capsid proteins. (Microbial infection) Integrin ITGAV:ITGB3 interacts with west nile virus envelope protein E. In terms of assembly, (Microbial infection) Interacts with HIV-1 Tat. ITGAV:ITGB3 interacts with AGRA2. In terms of processing, phosphorylated on tyrosine residues in response to thrombin-induced platelet aggregation. Probably involved in outside-in signaling. A peptide (AA 740-762) is capable of binding GRB2 only when both Tyr-773 and Tyr-785 are phosphorylated. Phosphorylation of Thr-779 inhibits SHC binding. Isoform beta-3A and isoform beta-3C are widely expressed. Isoform beta-3A is specifically expressed in osteoblast cells; isoform beta-3C is specifically expressed in prostate and testis.

It is found in the cell membrane. The protein localises to the cell projection. It localises to the lamellipodium membrane. Its subcellular location is the cell junction. The protein resides in the focal adhesion. It is found in the postsynaptic cell membrane. The protein localises to the synapse. Functionally, integrin alpha-V/beta-3 (ITGAV:ITGB3) is a receptor for cytotactin, fibronectin, laminin, matrix metalloproteinase-2, osteopontin, osteomodulin, prothrombin, thrombospondin, vitronectin and von Willebrand factor. Integrin alpha-IIb/beta-3 (ITGA2B:ITGB3) is a receptor for fibronectin, fibrinogen, plasminogen, prothrombin, thrombospondin and vitronectin. Integrins alpha-IIb/beta-3 and alpha-V/beta-3 recognize the sequence R-G-D in a wide array of ligands. Integrin alpha-IIb/beta-3 recognizes the sequence H-H-L-G-G-G-A-K-Q-A-G-D-V in fibrinogen gamma chain. Following activation integrin alpha-IIb/beta-3 brings about platelet/platelet interaction through binding of soluble fibrinogen. This step leads to rapid platelet aggregation which physically plugs ruptured endothelial surface. Fibrinogen binding enhances SELP expression in activated platelets. ITGAV:ITGB3 binds to fractalkine (CX3CL1) and acts as its coreceptor in CX3CR1-dependent fractalkine signaling. ITGAV:ITGB3 binds to NRG1 (via EGF domain) and this binding is essential for NRG1-ERBB signaling. ITGAV:ITGB3 binds to FGF1 and this binding is essential for FGF1 signaling. ITGAV:ITGB3 binds to FGF2 and this binding is essential for FGF2 signaling. ITGAV:ITGB3 binds to IGF1 and this binding is essential for IGF1 signaling. ITGAV:ITGB3 binds to IGF2 and this binding is essential for IGF2 signaling. ITGAV:ITGB3 binds to IL1B and this binding is essential for IL1B signaling. ITGAV:ITGB3 binds to PLA2G2A via a site (site 2) which is distinct from the classical ligand-binding site (site 1) and this induces integrin conformational changes and enhanced ligand binding to site 1. ITGAV:ITGB3 acts as a receptor for fibrillin-1 (FBN1) and mediates R-G-D-dependent cell adhesion to FBN1. In brain, plays a role in synaptic transmission and plasticity. Involved in the regulation of the serotonin neurotransmission, is required to localize to specific compartments within the synapse the serotonin receptor SLC6A4 and for an appropriate reuptake of serotonin. Controls excitatory synaptic strength by regulating GRIA2-containing AMPAR endocytosis, which affects AMPAR abundance and composition. ITGAV:ITGB3 act as a receptor for CD40LG. ITGAV:ITGB3 acts as a receptor for IBSP and promotes cell adhesion and migration to IBSP. In terms of biological role, (Microbial infection) Integrin ITGAV:ITGB3 acts as a receptor for Herpes virus 8/HHV-8. Its function is as follows. (Microbial infection) Integrin ITGAV:ITGB3 acts as a receptor for Coxsackievirus A9. (Microbial infection) Acts as a receptor for Hantaan virus. Functionally, (Microbial infection) Integrin ITGAV:ITGB3 acts as a receptor for Cytomegalovirus/HHV-5. In terms of biological role, (Microbial infection) Integrin ITGA5:ITGB3 acts as a receptor for Human metapneumovirus. Its function is as follows. (Microbial infection) Integrin ITGAV:ITGB3 acts aP05556s a receptor for Human parechovirus 1. (Microbial infection) Integrin ITGAV:ITGB3 acts as a receptor for West nile virus. Functionally, (Microbial infection) In case of HIV-1 infection, the interaction with extracellular viral Tat protein seems to enhance angiogenesis in Kaposi's sarcoma lesions. This chain is Integrin beta-3, found in Homo sapiens (Human).